A 178-amino-acid chain; its full sequence is MFGIHSLAGVLLLVIVQRQLASPLQEAEDNSSLETTDPLLEDLMGVSNVKRHSEGTFSNDYSKYQEERMAQDFVQWLMNSKRSGAPSKRHADGTYTSDVSTYLQDQAAKDFVSWLKSGRARRESAEESRNGPMSRRHVDGSFTSDVNKVLDSLAAKEYLLWVMTSKTSGKSNKRQEDH.

The first 21 residues, 1–21 (MFGIHSLAGVLLLVIVQRQLA), serve as a signal peptide directing secretion. 3 consecutive propeptides follow at residues 83 to 87 (SGAPS), 123 to 134 (ESAEESRNGPMS), and 171 to 178 (SNKRQEDH).

Belongs to the glucagon family.

The protein resides in the secreted. Its function is as follows. Promotes hydrolysis of glycogen and lipids, and raises the blood sugar level. The sequence is that of Glucagon-1 (gcg1) from Oncorhynchus mykiss (Rainbow trout).